Consider the following 69-residue polypeptide: Large ribosomal subunit protein uL30 (69 aa).

It belongs to the universal ribosomal protein uL30 family. Part of the 50S ribosomal subunit.

The protein is Large ribosomal subunit protein uL30 of Rhizobium etli (strain ATCC 51251 / DSM 11541 / JCM 21823 / NBRC 15573 / CFN 42).